Consider the following 225-residue polypeptide: Ribonuclease 3 (225 aa).

An RNase III domain is found at 4-133 (FEKLETLLGY…LIAAIYLDSN (130 aa)). Glu-46 is a binding site for Mg(2+). Residue Asp-50 is part of the active site. Mg(2+) is bound by residues Asn-119 and Glu-122. Glu-122 is an active-site residue. A DRBM domain is found at 158-225 (DPKTALQEWA…AARSLLHRLK (68 aa)).

It belongs to the ribonuclease III family. Homodimer. The cofactor is Mg(2+).

The protein localises to the cytoplasm. It carries out the reaction Endonucleolytic cleavage to 5'-phosphomonoester.. Functionally, digests double-stranded RNA. Involved in the processing of primary rRNA transcript to yield the immediate precursors to the large and small rRNAs (23S and 16S). Processes some mRNAs, and tRNAs when they are encoded in the rRNA operon. Processes pre-crRNA and tracrRNA of type II CRISPR loci if present in the organism. This Rickettsia prowazekii (strain Madrid E) protein is Ribonuclease 3.